Reading from the N-terminus, the 627-residue chain is Coiled-coil domain-containing protein 22 (627 aa).

The tract at residues 1-321 (MEEADRILIH…VADIPAASQR (321 aa)) is sufficient for interaction with COMMD1. The sufficicient and required for interaction with CCDC93 stretch occupies residues 1 to 447 (MEEADRILIH…LQDCRELESS (447 aa)). The stretch at 321–384 (RPEQDTRAAQ…SVAEQEQALR (64 aa)) forms a coiled coil. A Phosphoserine modification is found at Ser410. The stretch at 448–535 (RRLVEIQELH…NSLSGKLDRT (88 aa)) forms a coiled coil.

This sequence belongs to the CCDC22 family. In terms of assembly, component of the commander complex consisting of the CCC subcomplex and the retriever subcomplex. Component of the CCC (COMMD/CCDC22/CCDC93) subcomplex consisting of COMMD1, COMMD2, COMMD3, COMMD4, COMMD5, COMMD6, COMMD7, COMMD8, COMMD9, COMMD10, CCDC22 and CCDC93. Forms a coiled-coil heterodimer with CCDC22; this heterodimer interacts with the guanine nucleotide exchange factor DENND10; the interaction is direct. Interacts with CUL1, CUL2, CUL3, SKP1, BTRC. Interacts with SNX17 and SNX31. Interacts with CPNE1 and CPNE4.

The protein resides in the endosome. It localises to the cytoplasm. Its subcellular location is the cytoskeleton. It is found in the microtubule organizing center. The protein localises to the centrosome. In terms of biological role, component of the commander complex that is essential for endosomal recycling of transmembrane cargos; the Commander complex is composed of composed of the CCC subcomplex and the retriever subcomplex. Component of the CCC complex, which is involved in the regulation of endosomal recycling of surface proteins, including integrins, signaling receptor and channels. Involved in regulation of NF-kappa-B signaling. Promotes ubiquitination of I-kappa-B-kinase subunit IKBKB and its subsequent proteasomal degradation leading to NF-kappa-B activation; the function may involve association with COMMD8 and a CUL1-dependent E3 ubiquitin ligase complex. May down-regulate NF-kappa-B activity via association with COMMD1 and involving a CUL2-dependent E3 ubiquitin ligase complex. Regulates the cellular localization of COMM domain-containing proteins, such as COMMD1 and COMMD10. Component of the CCC complex, which is involved in the regulation of endosomal recycling of surface proteins, including integrins, signaling receptor and channels. The CCC complex associates with SNX17, retriever and WASH complexes to prevent lysosomal degradation and promote cell surface recycling of numerous cargos such as integrins ITGA5:ITGB1. Plays a role in copper ion homeostasis. Involved in copper-dependent ATP7A trafficking between the trans-Golgi network and vesicles in the cell periphery; the function is proposed to depend on its association within the CCC complex and cooperation with the WASH complex on early endosomes. This is Coiled-coil domain-containing protein 22 from Rattus norvegicus (Rat).